Reading from the N-terminus, the 967-residue chain is Probable helicase DDB_G0274399 (967 aa).

A disordered region spans residues 161–192; it reads EMTDDEDTAPTSAATHVGAPTKSTTTTTTTTT. Residue 357-364 participates in ATP binding; the sequence is GPPGTGKT. Disordered regions lie at residues 529–553 and 892–967; these read SAIP…QDTS and QKQK…RTRR. The stretch at 890 to 949 forms a coiled coil; the sequence is NLQKQKDIEKRKKQHKRQKQKSKENDKKKQLKKRKELNNNDNNNNNKESSNKEVQEITNA. Residues 900–909 show a composition bias toward basic residues; that stretch reads RKKQHKRQKQ. A compositionally biased stretch (low complexity) spans 928 to 937; sequence NNDNNNNNKE.

This sequence belongs to the DNA2/NAM7 helicase family.

The protein localises to the nucleus. This Dictyostelium discoideum (Social amoeba) protein is Probable helicase DDB_G0274399.